A 226-amino-acid polypeptide reads, in one-letter code: Gap junction beta-2 protein (226 aa).

The stretch at 2 to 13 is an intramembrane region; it reads DWGALQTILGGV. Residues 14–20 lie on the Cytoplasmic side of the membrane; it reads NKYSTSI. Residues 21 to 40 traverse the membrane as a helical segment; it reads GKIWLTVLFIFRIMILVVAA. At 41–73 the chain is on the extracellular side; sequence KEVWGDEQADFVCNTLQPGCKNVCYDHYFPISH. 3 residues coordinate Ca(2+): E42, G45, and E47. Disulfide bonds link C53-C180, C60-C174, and C64-C169. A helical membrane pass occupies residues 74-94; sequence IRLWALQLIFVSTPALLVAMH. The Cytoplasmic segment spans residues 95–135; it reads VAYRRHEKKRKFIKGEIKNEFKDIEEIKTQKVRIEGSLWWT. A helical membrane pass occupies residues 136-156; it reads YTSSIFFRVVFEAAFMYVFYV. The Extracellular segment spans residues 157-189; it reads MYDGFSMQRLVKCNAWPCPNTVDCFVSRPTEKT. The helical transmembrane segment at 190–210 threads the bilayer; that stretch reads VFTVFMIAVSGICILLNVTEL. The Cytoplasmic portion of the chain corresponds to 211–226; that stretch reads CYLLIRYCSGKSKKPV.

The protein belongs to the connexin family. Beta-type (group I) subfamily. As to quaternary structure, a hemichannel or connexon is composed of a hexamer of connexins. A functional gap junction is formed by the apposition of two hemichannels. Forms heteromeric channels with GJB4. Interacts with CNST.

It localises to the cell membrane. Its subcellular location is the cell junction. The protein localises to the gap junction. In terms of biological role, structural component of gap junctions. Gap junctions are dodecameric channels that connect the cytoplasm of adjoining cells. They are formed by the docking of two hexameric hemichannels, one from each cell membrane. Small molecules and ions diffuse from one cell to a neighboring cell via the central pore. This chain is Gap junction beta-2 protein (GJB2), found in Macaca mulatta (Rhesus macaque).